Here is a 226-residue protein sequence, read N- to C-terminus: MNQSPTWHDVIGEEKKQSYFVDTLNFVEAERAAGKAIYPPAKDVFNAFRFTEFNDVKVVILGQDPYHGPNQAHGLCFSVLPGIKTPPSLVNMYKELAQDIEGFQIPQHGFLQSWAEQGVLLLNTVLTVEQGKAHSHSKTGWETFTDRVIEAINQHQHGVVFLLWGSHAQKKGRFIDRSKHHVLAAPHPSPLSAHRGFLGCKHFSQANQLLASQGKEPINWHLPLTV.

The active-site Proton acceptor is D64.

This sequence belongs to the uracil-DNA glycosylase (UDG) superfamily. UNG family.

The protein localises to the cytoplasm. It catalyses the reaction Hydrolyzes single-stranded DNA or mismatched double-stranded DNA and polynucleotides, releasing free uracil.. In terms of biological role, excises uracil residues from the DNA which can arise as a result of misincorporation of dUMP residues by DNA polymerase or due to deamination of cytosine. This is Uracil-DNA glycosylase from Vibrio parahaemolyticus serotype O3:K6 (strain RIMD 2210633).